The primary structure comprises 206 residues: Acireductone dioxygenase (206 aa).

The Fe(2+) site is built by His-102, His-104, Glu-108, and His-146. 4 residues coordinate Ni(2+): His-102, His-104, Glu-108, and His-146.

Belongs to the acireductone dioxygenase (ARD) family. In terms of assembly, monomer. Fe(2+) is required as a cofactor. The cofactor is Ni(2+).

The enzyme catalyses 1,2-dihydroxy-5-(methylsulfanyl)pent-1-en-3-one + O2 = 3-(methylsulfanyl)propanoate + CO + formate + 2 H(+). It catalyses the reaction 1,2-dihydroxy-5-(methylsulfanyl)pent-1-en-3-one + O2 = 4-methylsulfanyl-2-oxobutanoate + formate + 2 H(+). It functions in the pathway amino-acid biosynthesis; L-methionine biosynthesis via salvage pathway; L-methionine from S-methyl-5-thio-alpha-D-ribose 1-phosphate: step 5/6. Its function is as follows. Catalyzes 2 different reactions between oxygen and the acireductone 1,2-dihydroxy-3-keto-5-methylthiopentene (DHK-MTPene) depending upon the metal bound in the active site. Fe-containing acireductone dioxygenase (Fe-ARD) produces formate and 2-keto-4-methylthiobutyrate (KMTB), the alpha-ketoacid precursor of methionine in the methionine recycle pathway. Ni-containing acireductone dioxygenase (Ni-ARD) produces methylthiopropionate, carbon monoxide and formate, and does not lie on the methionine recycle pathway. This Frankia alni (strain DSM 45986 / CECT 9034 / ACN14a) protein is Acireductone dioxygenase.